The primary structure comprises 297 residues: tRNA uridine(34) hydroxylase (297 aa).

The Rhodanese domain maps to R133–L228. The active-site Cysteine persulfide intermediate is the C188.

The protein belongs to the TrhO family.

It carries out the reaction uridine(34) in tRNA + AH2 + O2 = 5-hydroxyuridine(34) in tRNA + A + H2O. Catalyzes oxygen-dependent 5-hydroxyuridine (ho5U) modification at position 34 in tRNAs. The protein is tRNA uridine(34) hydroxylase of Arthrobacter sp. (strain FB24).